The following is a 188-amino-acid chain: Photosystem I assembly protein Ycf4 (188 aa).

The next 2 membrane-spanning stretches (helical) occupy residues 22-42 (LGWA…GLSS) and 68-88 (LVMC…WCAI).

Belongs to the Ycf4 family.

Its subcellular location is the plastid. It is found in the chloroplast thylakoid membrane. Its function is as follows. Seems to be required for the assembly of the photosystem I complex. This chain is Photosystem I assembly protein Ycf4, found in Zygnema circumcarinatum (Green alga).